The sequence spans 427 residues: Diaminobutyrate--2-oxoglutarate transaminase (427 aa).

At K264 the chain carries N6-(pyridoxal phosphate)lysine.

Belongs to the class-III pyridoxal-phosphate-dependent aminotransferase family. Pyridoxal 5'-phosphate is required as a cofactor.

The enzyme catalyses L-2,4-diaminobutanoate + 2-oxoglutarate = L-aspartate 4-semialdehyde + L-glutamate. The protein operates within amine and polyamine biosynthesis; ectoine biosynthesis; L-ectoine from L-aspartate 4-semialdehyde: step 1/3. In terms of biological role, catalyzes reversively the conversion of L-aspartate beta-semialdehyde (ASA) to L-2,4-diaminobutyrate (DABA) by transamination with L-glutamate. The polypeptide is Diaminobutyrate--2-oxoglutarate transaminase (ectB) (Wolinella succinogenes (strain ATCC 29543 / DSM 1740 / CCUG 13145 / JCM 31913 / LMG 7466 / NCTC 11488 / FDC 602W) (Vibrio succinogenes)).